A 212-amino-acid polypeptide reads, in one-letter code: 3-isopropylmalate dehydratase small subunit (212 aa).

It belongs to the LeuD family. LeuD type 1 subfamily. Heterodimer of LeuC and LeuD.

The enzyme catalyses (2R,3S)-3-isopropylmalate = (2S)-2-isopropylmalate. It functions in the pathway amino-acid biosynthesis; L-leucine biosynthesis; L-leucine from 3-methyl-2-oxobutanoate: step 2/4. Catalyzes the isomerization between 2-isopropylmalate and 3-isopropylmalate, via the formation of 2-isopropylmaleate. This is 3-isopropylmalate dehydratase small subunit from Thiobacillus denitrificans (strain ATCC 25259 / T1).